Here is a 629-residue protein sequence, read N- to C-terminus: UvrABC system protein C (629 aa).

The GIY-YIG domain maps to 26 to 105; it reads TSPGIYQFKN…IKELKPRYNV (80 aa). The region spanning 219–254 is the UVR domain; that stretch reads SALIRSLTENMHLAATELRFEQAAEIKAQIESLKRY.

It belongs to the UvrC family. As to quaternary structure, interacts with UvrB in an incision complex.

The protein localises to the cytoplasm. Its function is as follows. The UvrABC repair system catalyzes the recognition and processing of DNA lesions. UvrC both incises the 5' and 3' sides of the lesion. The N-terminal half is responsible for the 3' incision and the C-terminal half is responsible for the 5' incision. This is UvrABC system protein C from Chlorobium chlorochromatii (strain CaD3).